Consider the following 66-residue polypeptide: Beta-defensin 107A (66 aa).

The N-terminal stretch at 1 to 22 (MKIFFFIFAALFLLAQIFQART) is a signal peptide. 2 disulfide bridges follow: cysteine 37-cysteine 51 and cysteine 41-cysteine 60.

The protein belongs to the beta-defensin family.

Its subcellular location is the secreted. Has antibacterial activity. This Gorilla gorilla gorilla (Western lowland gorilla) protein is Beta-defensin 107A (DEFB107A).